Here is a 412-residue protein sequence, read N- to C-terminus: Peptidase T (412 aa).

Residue His-84 coordinates Zn(2+). Residue Asp-86 is part of the active site. Asp-146 is a binding site for Zn(2+). Glu-179 functions as the Proton acceptor in the catalytic mechanism. Zn(2+) is bound by residues Glu-180, Asp-202, and His-385.

This sequence belongs to the peptidase M20B family. Zn(2+) serves as cofactor.

The protein localises to the cytoplasm. It carries out the reaction Release of the N-terminal residue from a tripeptide.. Its function is as follows. Cleaves the N-terminal amino acid of tripeptides. The chain is Peptidase T from Haemophilus influenzae (strain PittEE).